A 584-amino-acid chain; its full sequence is POTE ankyrin domain family member D (584 aa).

ANK repeat units follow at residues 172 to 201 (EKRTALHLASANGNSEVVQLLLDRRCQLNV), 205 to 234 (KKRTALIKAIQCQEDECVLMLLEHGADRNI), 238 to 267 (YGNTALHYAIYNEDKLMAKALLLYGADIES), 271 to 300 (CGLTPLLLGVHEQKQQVVKFLIKKKANLNV), 304 to 333 (YGRTALILAVCCGSASIVNLLLEQNVDVSS), and 337 to 366 (SGQTAREYAVSSHHHVICELLSDYKEKQML). The interval 369–502 (SSENSNPEQD…ILTNKQKQIE (134 aa)) is disordered. Composition is skewed to basic and acidic residues over residues 377-392 (QDLKLTSEEESQRLKV), 401-412 (MSQEPEINKDCD), and 466-481 (EEYHSDEQNDTRKQLS). The segment covering 482-498 (EEQNTGISQDEILTNKQ) has biased composition (polar residues). Residues 494 to 583 (LTNKQKQIEV…LNEEALTKTN (90 aa)) adopt a coiled-coil conformation.

This sequence belongs to the POTE family. Expressed in prostate, ovary, testis, placenta and prostate cancer cell lines. Localizes to basal and terminal prostate epithelial cells.

Its subcellular location is the cell membrane. This Homo sapiens (Human) protein is POTE ankyrin domain family member D (POTED).